A 93-amino-acid polypeptide reads, in one-letter code: uncharacterized protein (93 aa).

It localises to the plastid. Its subcellular location is the chloroplast. This is an uncharacterized protein from Diacronema lutheri (Unicellular marine alga).